The chain runs to 291 residues: MSFRHFKRRLDTSSADESSSADEEHPDQNVSLTEKSASLSHSDLGGEILNGTGKNRTPNDGQESNESDGSPESDESPESEESSDNSDSSDSDDMRPLPRPLFMKKKANNLQKATKIDQPWNAQDDARVLQTKKENMIKNIDKANQVAKNYETMKLRLNTNYSTNEELIKQCLLLDDNDEVDSEKERQKWFERQNERKQKHRRIQLAKQRESEEYEAKRFEAMQKGKDGNTKYDVILDKEKEKLDHKKQRSAEKVEKSHNNNRYKITRTKNVEFGDLGKNSRDYEETEYSVI.

2 disordered regions span residues 1-99 and 239-266; these read MSFR…PLPR and EKEK…YKIT. Polar residues-rich tracts occupy residues 28 to 41 and 52 to 62; these read QNVS…SLSH and TGKNRTPNDGQ. Acidic residues predominate over residues 63-91; sequence ESNESDGSPESDESPESEESSDNSDSSDS. Residues 239–258 are compositionally biased toward basic and acidic residues; it reads EKEKLDHKKQRSAEKVEKSH.

It belongs to the SPP381 family. As to quaternary structure, component of the U4/U6-U5 tri-snRNP complex composed of the U4, U6 and U5 snRNAs and at least PRP3, PRP4, PRP6, PRP8, PRP18, PRP31, PRP38, SNU13, SNU23, SNU66, SNU114, SPP381, SMB1, SMD1, SMD2, SMD3, SMX2, SMX3, LSM2, LSM3, LSM4, LSM5, LSM6, LSM7, LSM8, BRR2 and DIB1. Interacts with PRP38.

It is found in the nucleus. Functionally, component of the spliceosome and rRNA processing machinery. In association with the spliceosomal U4/U6.U5 tri-snRNP particle, required for splicing of pre-mRNA. In Saccharomyces cerevisiae (strain ATCC 204508 / S288c) (Baker's yeast), this protein is Pre-mRNA-splicing factor SPP381 (SPP381).